A 326-amino-acid polypeptide reads, in one-letter code: Nucleotide sugar transporter SLC35D2 (326 aa).

Residues 1-15 (MEEPNAAPLPSRLAR) are Extracellular-facing. The chain crosses the membrane as a helical span at residues 16-36 (LLSALFYGTCSFLIVLVNKAL). The Cytoplasmic portion of the chain corresponds to 37–41 (LTTYG). Residues 42–62 (FPSPIVLGIGQMATTIMILYV) form a helical membrane-spanning segment. Topologically, residues 63 to 130 (FKLNKIIHFP…LLEAIILGTQ (68 aa)) are extracellular. The helical transmembrane segment at 131-151 (YSLNIILSVLAIVLGAFIAAG) threads the bilayer. Over 152 to 155 (SDLT) the chain is Cytoplasmic. The helical transmembrane segment at 156-176 (FNLEGYVFVFLNDIFTAANGV) threads the bilayer. Over 177 to 189 (YTKQKMDPKELGK) the chain is Extracellular. A helical transmembrane segment spans residues 190 to 210 (YGVLFYNACFMLIPTVIISVS). Over 211–225 (TGDFQQATEFRHWKN) the chain is Cytoplasmic. Residues 226–246 (VLFIIQFLLSCLLGFLLMYST) form a helical membrane-spanning segment. At 247–253 (ALCSYYN) the chain is on the extracellular side. A helical transmembrane segment spans residues 254 to 276 (SALTTAVVGAIKNVSVAYIGMLV). Residues 277–280 (GGDY) are Cytoplasmic-facing. The helical transmembrane segment at 281–303 (IFSLLNFIGLNICMAGGLRYSFL) threads the bilayer. The Extracellular portion of the chain corresponds to 304-326 (TLSSQLKPKQPVDEESIPLDLKS).

It belongs to the TPT transporter family. SLC35D subfamily.

It localises to the golgi apparatus membrane. The catalysed reaction is UMP(out) + UDP-N-acetyl-alpha-D-glucosamine(in) = UMP(in) + UDP-N-acetyl-alpha-D-glucosamine(out). The enzyme catalyses UMP(out) + UDP-alpha-D-glucose(in) = UMP(in) + UDP-alpha-D-glucose(out). Its function is as follows. Nucleotide sugar antiporter transporting UDP-N-acetylglucosamine (UDP-GlcNAc) and UDP-glucose (UDP-Glc) from the cytosol into the lumen of the Golgi in exchange of UMP. By supplying UDP-N-acetylglucosamine, a donor substrate to heparan sulfate synthases, probably takes part in the synthesis of these glycoconjugates. In Mus musculus (Mouse), this protein is Nucleotide sugar transporter SLC35D2.